The sequence spans 93 residues: Integration host factor subunit beta (93 aa).

This sequence belongs to the bacterial histone-like protein family. In terms of assembly, heterodimer of an alpha and a beta chain.

Its function is as follows. This protein is one of the two subunits of integration host factor, a specific DNA-binding protein that functions in genetic recombination as well as in transcriptional and translational control. This chain is Integration host factor subunit beta, found in Tolumonas auensis (strain DSM 9187 / NBRC 110442 / TA 4).